Reading from the N-terminus, the 317-residue chain is 4-hydroxy-3-methylbut-2-enyl diphosphate reductase (317 aa).

A [4Fe-4S] cluster-binding site is contributed by C12. Positions 41 and 74 each coordinate (2E)-4-hydroxy-3-methylbut-2-enyl diphosphate. Dimethylallyl diphosphate-binding residues include H41 and H74. Isopentenyl diphosphate-binding residues include H41 and H74. C96 is a binding site for [4Fe-4S] cluster. H124 is a binding site for (2E)-4-hydroxy-3-methylbut-2-enyl diphosphate. Position 124 (H124) interacts with dimethylallyl diphosphate. H124 contacts isopentenyl diphosphate. Residue E126 is the Proton donor of the active site. T168 contacts (2E)-4-hydroxy-3-methylbut-2-enyl diphosphate. Residue C198 participates in [4Fe-4S] cluster binding. Positions 226, 227, 228, and 270 each coordinate (2E)-4-hydroxy-3-methylbut-2-enyl diphosphate. Positions 226, 227, 228, and 270 each coordinate dimethylallyl diphosphate. S226, S227, N228, and S270 together coordinate isopentenyl diphosphate.

It belongs to the IspH family. [4Fe-4S] cluster serves as cofactor.

The catalysed reaction is isopentenyl diphosphate + 2 oxidized [2Fe-2S]-[ferredoxin] + H2O = (2E)-4-hydroxy-3-methylbut-2-enyl diphosphate + 2 reduced [2Fe-2S]-[ferredoxin] + 2 H(+). It catalyses the reaction dimethylallyl diphosphate + 2 oxidized [2Fe-2S]-[ferredoxin] + H2O = (2E)-4-hydroxy-3-methylbut-2-enyl diphosphate + 2 reduced [2Fe-2S]-[ferredoxin] + 2 H(+). It functions in the pathway isoprenoid biosynthesis; dimethylallyl diphosphate biosynthesis; dimethylallyl diphosphate from (2E)-4-hydroxy-3-methylbutenyl diphosphate: step 1/1. The protein operates within isoprenoid biosynthesis; isopentenyl diphosphate biosynthesis via DXP pathway; isopentenyl diphosphate from 1-deoxy-D-xylulose 5-phosphate: step 6/6. Functionally, catalyzes the conversion of 1-hydroxy-2-methyl-2-(E)-butenyl 4-diphosphate (HMBPP) into a mixture of isopentenyl diphosphate (IPP) and dimethylallyl diphosphate (DMAPP). Acts in the terminal step of the DOXP/MEP pathway for isoprenoid precursor biosynthesis. The chain is 4-hydroxy-3-methylbut-2-enyl diphosphate reductase from Hahella chejuensis (strain KCTC 2396).